Consider the following 179-residue polypeptide: Cell division protein SepF (179 aa).

Positions 19-55 (DSSLPYEKRDEPVFTSVNSSQEPALPMNQPSQSAGAK) are disordered. The span at 33 to 55 (TSVNSSQEPALPMNQPSQSAGAK) shows a compositional bias: polar residues.

Belongs to the SepF family. In terms of assembly, homodimer. Interacts with FtsZ.

The protein localises to the cytoplasm. In terms of biological role, cell division protein that is part of the divisome complex and is recruited early to the Z-ring. Probably stimulates Z-ring formation, perhaps through the cross-linking of FtsZ protofilaments. Its function overlaps with FtsA. The sequence is that of Cell division protein SepF from Streptococcus pneumoniae (strain JJA).